A 181-amino-acid chain; its full sequence is 3-isopropylmalate dehydratase small subunit (181 aa).

It belongs to the LeuD family. LeuD type 2 subfamily. Heterodimer of LeuC and LeuD.

It catalyses the reaction (2R,3S)-3-isopropylmalate = (2S)-2-isopropylmalate. The protein operates within amino-acid biosynthesis; L-leucine biosynthesis; L-leucine from 3-methyl-2-oxobutanoate: step 2/4. In terms of biological role, catalyzes the isomerization between 2-isopropylmalate and 3-isopropylmalate, via the formation of 2-isopropylmaleate. This Deinococcus deserti (strain DSM 17065 / CIP 109153 / LMG 22923 / VCD115) protein is 3-isopropylmalate dehydratase small subunit.